Reading from the N-terminus, the 78-residue chain is MKLKISFLILVLFSVFFAIEGIIKWFPASVNGKGHSSCTNGLEMTEEDFCKMLCGIDGKLRESKCVDHWCYCSQILFP.

Positions 1–21 are cleaved as a signal peptide; it reads MKLKISFLILVLFSVFFAIEG. A propeptide spanning residues 22–32 is cleaved from the precursor; that stretch reads IIKWFPASVNG.

Contains 3 disulfide bonds. In terms of tissue distribution, expressed by the venom gland.

It localises to the secreted. Reversibly inhibits potassium channels. The protein is Toxin BmTxKS4 of Olivierus martensii (Manchurian scorpion).